The sequence spans 920 residues: Protein translocase subunit SecA (920 aa).

Residues Gln85, 103 to 107 (GEGKT), and Asp514 each bind ATP. Residues Cys904, Cys906, Cys915, and His916 each coordinate Zn(2+).

The protein belongs to the SecA family. In terms of assembly, monomer and homodimer. Part of the essential Sec protein translocation apparatus which comprises SecA, SecYEG and auxiliary proteins SecDF-YajC and YidC. The cofactor is Zn(2+).

The protein resides in the cell inner membrane. Its subcellular location is the cytoplasm. The catalysed reaction is ATP + H2O + cellular proteinSide 1 = ADP + phosphate + cellular proteinSide 2.. Functionally, part of the Sec protein translocase complex. Interacts with the SecYEG preprotein conducting channel. Has a central role in coupling the hydrolysis of ATP to the transfer of proteins into and across the cell membrane, serving both as a receptor for the preprotein-SecB complex and as an ATP-driven molecular motor driving the stepwise translocation of polypeptide chains across the membrane. The protein is Protein translocase subunit SecA of Janthinobacterium sp. (strain Marseille) (Minibacterium massiliensis).